A 471-amino-acid polypeptide reads, in one-letter code: tRNA-2-methylthio-N(6)-dimethylallyladenosine synthase (471 aa).

Residues 29–146 form the MTTase N-terminal domain; it reads KKFHIKTYGC…LPELIAKVNR (118 aa). Residues C38, C74, C109, C187, C191, and C194 each coordinate [4Fe-4S] cluster. One can recognise a Radical SAM core domain in the interval 173–405; it reads RVPQSSAFLS…QQLLKEKQLE (233 aa). The region spanning 408–467 is the TRAM domain; sequence KKMIGKTVTVLFDKKHPDKISGRTEYMQQVFSDDSNLLDKIVTMRVEDASTFTLKCTAED.

It belongs to the methylthiotransferase family. MiaB subfamily. Monomer. [4Fe-4S] cluster serves as cofactor.

It localises to the cytoplasm. It carries out the reaction N(6)-dimethylallyladenosine(37) in tRNA + (sulfur carrier)-SH + AH2 + 2 S-adenosyl-L-methionine = 2-methylsulfanyl-N(6)-dimethylallyladenosine(37) in tRNA + (sulfur carrier)-H + 5'-deoxyadenosine + L-methionine + A + S-adenosyl-L-homocysteine + 2 H(+). Catalyzes the methylthiolation of N6-(dimethylallyl)adenosine (i(6)A), leading to the formation of 2-methylthio-N6-(dimethylallyl)adenosine (ms(2)i(6)A) at position 37 in tRNAs that read codons beginning with uridine. This chain is tRNA-2-methylthio-N(6)-dimethylallyladenosine synthase, found in Neorickettsia sennetsu (strain ATCC VR-367 / Miyayama) (Ehrlichia sennetsu).